The sequence spans 151 residues: uncharacterized protein (151 aa).

A disordered region spans residues 122–151 (GVAQRQVPTTGTHSFFHCTSEGNKEKPHHF).

This is an uncharacterized protein from Homo sapiens (Human).